The primary structure comprises 239 residues: Ribonuclease PH (239 aa).

Residues R87 and 125 to 127 (GTR) each bind phosphate.

Belongs to the RNase PH family. Homohexameric ring arranged as a trimer of dimers.

It catalyses the reaction tRNA(n+1) + phosphate = tRNA(n) + a ribonucleoside 5'-diphosphate. Functionally, phosphorolytic 3'-5' exoribonuclease that plays an important role in tRNA 3'-end maturation. Removes nucleotide residues following the 3'-CCA terminus of tRNAs; can also add nucleotides to the ends of RNA molecules by using nucleoside diphosphates as substrates, but this may not be physiologically important. Probably plays a role in initiation of 16S rRNA degradation (leading to ribosome degradation) during starvation. This chain is Ribonuclease PH, found in Pseudomonas paraeruginosa (strain DSM 24068 / PA7) (Pseudomonas aeruginosa (strain PA7)).